Here is a 968-residue protein sequence, read N- to C-terminus: RNA polymerase-associated protein RapA (968 aa).

Positions 164-334 constitute a Helicase ATP-binding domain; sequence DVGRRHAPRV…FARLRLLDPN (171 aa). 177–184 serves as a coordination point for ATP; that stretch reads DEVGLGKT. The DEAH box signature appears at 280-283; it reads DEAH. The Helicase C-terminal domain maps to 490–662; sequence RVEWLMGYLT…YLAAPENTEG (173 aa).

The protein belongs to the SNF2/RAD54 helicase family. RapA subfamily. In terms of assembly, interacts with the RNAP. Has a higher affinity for the core RNAP than for the holoenzyme. Its ATPase activity is stimulated by binding to RNAP.

In terms of biological role, transcription regulator that activates transcription by stimulating RNA polymerase (RNAP) recycling in case of stress conditions such as supercoiled DNA or high salt concentrations. Probably acts by releasing the RNAP, when it is trapped or immobilized on tightly supercoiled DNA. Does not activate transcription on linear DNA. Probably not involved in DNA repair. This Cronobacter sakazakii (strain ATCC BAA-894) (Enterobacter sakazakii) protein is RNA polymerase-associated protein RapA.